Consider the following 425-residue polypeptide: Histone-binding protein RBBP7 (425 aa).

7 WD repeats span residues 47 to 122 (QWLP…KINH), 128 to 173 (RARY…LRLR), 181 to 217 (GLSW…KVVD), 228 to 269 (VVED…HSVD), 275 to 312 (VNCL…LHSF), 318 to 369 (EIFQ…LFIH), and 376 to 403 (ISDF…IWQM).

The protein belongs to the WD repeat RBAP46/RBAP48/MSI1 family. As to quaternary structure, binds directly to helix 1 of the histone fold of histone H4, a region that is not accessible when H4 is in chromatin.

It localises to the nucleus. Core histone-binding subunit that may target chromatin remodeling factors, histone acetyltransferases and histone deacetylases to their histone substrates in a manner that is regulated by nucleosomal DNA. Component of several complexes which regulate chromatin metabolism. This Xenopus laevis (African clawed frog) protein is Histone-binding protein RBBP7 (rbbp7).